The sequence spans 194 residues: MIIKDVEFIKSATKPSEYTEPLFLEVAFAGRSNVGKSSLINTLINRKSLVKTSSKPGCTQLINFFLLNGNLSLVDLPGYGYAKVSKKIRAQWGPMIERYLTVRETLRAIVLLIDMRREPQREELDLINWFTAHAIPYRIVLTKADKLSKTKQQKNISAIAKGLGMEQDRLIAFSSKTRLGRDRLWQELDTMLNP.

The EngB-type G domain maps to leucine 22–proline 194. GTP-binding positions include glycine 30–serine 37, glycine 57–leucine 61, aspartate 75–glycine 78, threonine 142–aspartate 145, and phenylalanine 173–serine 175. Positions 37 and 59 each coordinate Mg(2+).

Belongs to the TRAFAC class TrmE-Era-EngA-EngB-Septin-like GTPase superfamily. EngB GTPase family. The cofactor is Mg(2+).

Functionally, necessary for normal cell division and for the maintenance of normal septation. The chain is Probable GTP-binding protein EngB from Desulforapulum autotrophicum (strain ATCC 43914 / DSM 3382 / VKM B-1955 / HRM2) (Desulfobacterium autotrophicum).